The following is a 232-amino-acid chain: GTP cyclohydrolase III (232 aa).

Belongs to the archaeal-type GTP cyclohydrolase family.

The enzyme catalyses GTP + 3 H2O = 2-amino-5-formylamino-6-(5-phospho-D-ribosylamino)pyrimidin-4(3H)-one + 2 phosphate + 2 H(+). Its function is as follows. Catalyzes the formation of 2-amino-5-formylamino-6-ribofuranosylamino-4(3H)-pyrimidinone ribonucleotide monophosphate and inorganic phosphate from GTP. Also has an independent pyrophosphate phosphohydrolase activity. The sequence is that of GTP cyclohydrolase III from Saccharolobus islandicus (strain Y.N.15.51 / Yellowstone #2) (Sulfolobus islandicus).